We begin with the raw amino-acid sequence, 278 residues long: MKPTILTDIDGVCLSWQSGLPYFAQKYNLPLEHILKMIQDEKFISPGKLFNCDEELGVKLIEKYNRSDFIRYLSPYKDALCVINKLKEDYNFVAVTALGDSIDALLNRQFNLNALFPGAFSEVLMCSHDSSKEELFKKAKEKYNVICYIDDLAHHCDHASEILRVPVYWMARGERDNIPKTAQRVYTWNDVENKLFSPKENKESFDSEKAIKDVIEKMIKNDSFPWNTTWRTPGFNPYNPYHPYQTHPFQTWNYIKPGGIEYLYNRPTCGDNIFQGAF.

This is an uncharacterized protein from Escherichia coli (Bacteriophage T4).